We begin with the raw amino-acid sequence, 265 residues long: MEMO1 family protein Mbar_A1422 (265 aa).

The protein belongs to the MEMO1 family.

The chain is MEMO1 family protein Mbar_A1422 from Methanosarcina barkeri (strain Fusaro / DSM 804).